We begin with the raw amino-acid sequence, 76 residues long: Sec-independent protein translocase protein TatA (76 aa).

A helical transmembrane segment spans residues 1–21; it reads MGGLSIWHWLIVLLIVALVFG. The segment at 43-76 is disordered; sequence MKEGEAPADAQQLPRSGSVDVNAKETTRSDSNKA. The span at 64-76 shows a compositional bias: basic and acidic residues; sequence NAKETTRSDSNKA.

Belongs to the TatA/E family. As to quaternary structure, the Tat system comprises two distinct complexes: a TatABC complex, containing multiple copies of TatA, TatB and TatC subunits, and a separate TatA complex, containing only TatA subunits. Substrates initially bind to the TatABC complex, which probably triggers association of the separate TatA complex to form the active translocon.

It is found in the cell inner membrane. Part of the twin-arginine translocation (Tat) system that transports large folded proteins containing a characteristic twin-arginine motif in their signal peptide across membranes. TatA could form the protein-conducting channel of the Tat system. This is Sec-independent protein translocase protein TatA from Burkholderia lata (strain ATCC 17760 / DSM 23089 / LMG 22485 / NCIMB 9086 / R18194 / 383).